Consider the following 637-residue polypeptide: Probable ATP-binding protein YheS (637 aa).

ABC transporter domains lie at 2 to 246 (IVFS…AQQQ) and 313 to 527 (LKME…KQEN). ATP-binding positions include 34 to 41 (GKNGCGKS) and 345 to 352 (GRNGAGKS). The tract at residues 523–559 (QKQENQTDEAPKENANSAQARKDQKRREAELRAQTQP) is disordered. The segment covering 542–553 (ARKDQKRREAEL) has biased composition (basic and acidic residues).

It belongs to the ABC transporter superfamily. ABCF family. YheS subfamily.

Functionally, genetic data indicate it may be involved in ribosome assembly or function. The polypeptide is Probable ATP-binding protein YheS (yheS) (Escherichia coli O157:H7).